Here is a 275-residue protein sequence, read N- to C-terminus: Large ribosomal subunit protein uL2 (275 aa).

The segment covering 38 to 53 has biased composition (polar residues); the sequence is NSKAGRNNNGRITTRH. Disordered regions lie at residues 38 to 59 and 224 to 257; these read NSKA…GGHK and AMNP…KGFR.

This sequence belongs to the universal ribosomal protein uL2 family. Part of the 50S ribosomal subunit. Forms a bridge to the 30S subunit in the 70S ribosome.

One of the primary rRNA binding proteins. Required for association of the 30S and 50S subunits to form the 70S ribosome, for tRNA binding and peptide bond formation. It has been suggested to have peptidyltransferase activity; this is somewhat controversial. Makes several contacts with the 16S rRNA in the 70S ribosome. The chain is Large ribosomal subunit protein uL2 from Burkholderia thailandensis (strain ATCC 700388 / DSM 13276 / CCUG 48851 / CIP 106301 / E264).